Reading from the N-terminus, the 588-residue chain is Adenine deaminase (588 aa).

It belongs to the metallo-dependent hydrolases superfamily. Adenine deaminase family. As to quaternary structure, homodimer. It depends on Mn(2+) as a cofactor.

It carries out the reaction adenine + H2O + H(+) = hypoxanthine + NH4(+). The sequence is that of Adenine deaminase from Shigella boydii serotype 4 (strain Sb227).